The sequence spans 305 residues: Peroxisome biogenesis factor 2 (305 aa).

The Peroxisomal matrix portion of the chain corresponds to 1 to 15 (MAAREESTQSANRVL). Residues 16-42 (RISQLDALELNKALEQLVWSQFTQCFH) form a helical membrane-spanning segment. The Cytoplasmic portion of the chain corresponds to 43–48 (GFKPGL). A helical transmembrane segment spans residues 49–74 (LARFEPEVKAFLWLFLWRFTIYSKNA). Topologically, residues 75–98 (TVGQSVLNIQHKNDSSPNPVYQPP) are peroxisomal matrix. The helical transmembrane segment at 99 to 125 (SKNQKLLYAVCTIGGRWLEERCYDLFR) threads the bilayer. The Cytoplasmic segment spans residues 126–133 (NRHLASFG). The helical transmembrane segment at 134 to 160 (KAKQCMNFVVGLLKLGELMNFLIFLQK) threads the bilayer. At 161–187 (GKFATLTERLLGIHSVFCKPQNMREVG) the chain is on the peroxisomal matrix side. The helical transmembrane segment at 188-211 (FEYMNRELLWHGFAEFLIFLLPLI) threads the bilayer. The Cytoplasmic portion of the chain corresponds to 212-305 (NIQKLKAKLS…GIQMSEVNAL (94 aa)). 8 residues coordinate Zn(2+): Cys-244, Cys-247, Cys-259, His-261, Cys-264, Cys-267, Cys-280, and Cys-283. The segment at 244–284 (CALCGEWPTMPHTIGCEHVFCYYCVKSSFLFDIYFTCPKCG) adopts an RING-type zinc-finger fold.

The protein belongs to the pex2/pex10/pex12 family. In terms of assembly, component of the PEX2-PEX10-PEX12 retrotranslocation channel, composed of PEX2, PEX10 and PEX12. Forms intramolecular and intermolecular disulfide bonds in response to reactive oxygen species (ROS), promoting higher stability.

The protein localises to the peroxisome membrane. It carries out the reaction [E2 ubiquitin-conjugating enzyme]-S-ubiquitinyl-L-cysteine + [acceptor protein]-L-cysteine = [E2 ubiquitin-conjugating enzyme]-L-cysteine + [acceptor protein]-S-ubiquitinyl-L-cysteine.. The catalysed reaction is S-ubiquitinyl-[E2 ubiquitin-conjugating enzyme]-L-cysteine + [acceptor protein]-L-lysine = [E2 ubiquitin-conjugating enzyme]-L-cysteine + N(6)-ubiquitinyl-[acceptor protein]-L-lysine.. The protein operates within protein modification; protein ubiquitination. In terms of biological role, E3 ubiquitin-protein ligase component of a retrotranslocation channel required for peroxisome organization by mediating export of the PEX5 receptor from peroxisomes to the cytosol, thereby promoting PEX5 recycling. The retrotranslocation channel is composed of PEX2, PEX10 and PEX12; each subunit contributing transmembrane segments that coassemble into an open channel that specifically allows the passage of PEX5 through the peroxisomal membrane. PEX2 also regulates peroxisome organization by acting as a E3 ubiquitin-protein ligase. PEX2 ubiquitinates PEX5 during its passage through the retrotranslocation channel: catalyzes monoubiquitination of PEX5 at 'Cys-11', a modification that acts as a signal for PEX5 extraction into the cytosol. Required for pexophagy in response to starvation by mediating ubiquitination of peroxisomal proteins, such as PEX5 and ABCD3/PMP70. Also involved in the response to reactive oxygen species (ROS) by mediating 'Lys-48'-linked polyubiquitination and subsequent degradation of PNPLA2/ATGL, thereby regulating lipolysis. In Mus musculus (Mouse), this protein is Peroxisome biogenesis factor 2.